We begin with the raw amino-acid sequence, 437 residues long: GTP-binding protein ERG (437 aa).

A compositionally biased stretch (polar residues) spans 39–50; sequence QPNLDEPTSINE. The disordered stretch occupies residues 39 to 65; the sequence is QPNLDEPTSINEDGSSSDSVFDSSQYP. Positions 51–62 are enriched in low complexity; the sequence is DGSSSDSVFDSS. 2 positions are modified to phosphoserine: serine 111 and serine 112. An Era-type G domain is found at 152–333; the sequence is KSLNVGIIGP…LMDQAVKKPW (182 aa). The tract at residues 160 to 167 is G1; sequence GPPNAGKS. 160 to 167 lines the GTP pocket; that stretch reads GPPNAGKS. A G2 region spans residues 186-190; sequence NTTTH. Residues 207 to 210 form a G3 region; the sequence is DTPG. GTP is bound by residues 207–211 and 279–282; these read DTPGL and NKVD. Positions 279–282 are G4; sequence NKVD. The G5 stretch occupies residues 309–311; it reads ISG. One can recognise a KH type-2 domain in the interval 361 to 437; sequence VHQEIPYGLE…VHLILQVKLK (77 aa).

The protein belongs to the TRAFAC class TrmE-Era-EngA-EngB-Septin-like GTPase superfamily. Era GTPase family.

Functionally, has a crucial role in plant growth and development, possibly by influencing mitochondrial division. This Arabidopsis thaliana (Mouse-ear cress) protein is GTP-binding protein ERG (ERG).